A 403-amino-acid polypeptide reads, in one-letter code: S-adenosylmethionine synthase (403 aa).

An ATP-binding site is contributed by His17. Asp19 is a Mg(2+) binding site. Residue Glu45 coordinates K(+). Residues Glu58 and Gln104 each contribute to the L-methionine site. The segment at 104–114 (QSPDIAQGVDT) is flexible loop. ATP is bound by residues 179–181 (DGK), 250–251 (KF), Asp259, 265–266 (RK), Ala282, and Lys286. Asp259 provides a ligand contact to L-methionine. Lys290 is a binding site for L-methionine.

The protein belongs to the AdoMet synthase family. In terms of assembly, homotetramer; dimer of dimers. Mg(2+) is required as a cofactor. Requires K(+) as cofactor.

Its subcellular location is the cytoplasm. It carries out the reaction L-methionine + ATP + H2O = S-adenosyl-L-methionine + phosphate + diphosphate. It functions in the pathway amino-acid biosynthesis; S-adenosyl-L-methionine biosynthesis; S-adenosyl-L-methionine from L-methionine: step 1/1. Catalyzes the formation of S-adenosylmethionine (AdoMet) from methionine and ATP. The overall synthetic reaction is composed of two sequential steps, AdoMet formation and the subsequent tripolyphosphate hydrolysis which occurs prior to release of AdoMet from the enzyme. This Mycobacterium bovis (strain ATCC BAA-935 / AF2122/97) protein is S-adenosylmethionine synthase.